Consider the following 267-residue polypeptide: MSAGGAGGEAKGGYPPQTIMALGIVGGLVGIYLGNFAPPAYSFFGGLGAICATVWGADAVRRVASYGLGTGVPSIGMLALGMGILAALFGLSVGGTAGPIVAIVVAAIIGGVIGALANKVIGMGIPIMEKAMVEISCAGTLVILGLSVVIAGSFDFASVVQYVVANGYIALIFIIGGMGILHPFNASLGPDEKQDRTLMLAVEKGAIALIIAGFASSLHEGLMAAGLNMLIGIIIWYVAFSKHYALIKRDAYAVVGSGMLPSSEELQ.

7 helical membrane-spanning segments follow: residues I19–P39, I75–G95, A97–A117, T140–V160, Y162–H182, L198–L218, and G221–S241.

It belongs to the MtrC family. As to quaternary structure, the complex is composed of 8 subunits; MtrA, MtrB, MtrC, MtrD, MtrE, MtrF, MtrG and MtrH.

It localises to the cell membrane. The catalysed reaction is 5-methyl-5,6,7,8-tetrahydromethanopterin + coenzyme M + 2 Na(+)(in) = 5,6,7,8-tetrahydromethanopterin + methyl-coenzyme M + 2 Na(+)(out). It functions in the pathway one-carbon metabolism; methanogenesis from CO(2); methyl-coenzyme M from 5,10-methylene-5,6,7,8-tetrahydromethanopterin: step 2/2. In terms of biological role, part of a complex that catalyzes the formation of methyl-coenzyme M and tetrahydromethanopterin from coenzyme M and methyl-tetrahydromethanopterin. This is an energy-conserving, sodium-ion translocating step. This Methanosarcina barkeri (strain Fusaro / DSM 804) protein is Tetrahydromethanopterin S-methyltransferase subunit C.